The primary structure comprises 279 residues: 3-methyl-2-oxobutanoate hydroxymethyltransferase (279 aa).

Mg(2+) is bound by residues Asp-44 and Asp-83. 3-methyl-2-oxobutanoate is bound by residues 44-45 (DS), Asp-83, and Lys-112. Glu-114 provides a ligand contact to Mg(2+). The active-site Proton acceptor is the Glu-180.

Belongs to the PanB family. In terms of assembly, homodecamer; pentamer of dimers. Mg(2+) is required as a cofactor.

It is found in the cytoplasm. It carries out the reaction 3-methyl-2-oxobutanoate + (6R)-5,10-methylene-5,6,7,8-tetrahydrofolate + H2O = 2-dehydropantoate + (6S)-5,6,7,8-tetrahydrofolate. The protein operates within cofactor biosynthesis; (R)-pantothenate biosynthesis; (R)-pantoate from 3-methyl-2-oxobutanoate: step 1/2. Its function is as follows. Catalyzes the reversible reaction in which hydroxymethyl group from 5,10-methylenetetrahydrofolate is transferred onto alpha-ketoisovalerate to form ketopantoate. The polypeptide is 3-methyl-2-oxobutanoate hydroxymethyltransferase (Chloroflexus aggregans (strain MD-66 / DSM 9485)).